The following is a 253-amino-acid chain: Probable transcriptional regulatory protein slr0989 (253 aa).

A disordered region spans residues methionine 1–lysine 22.

It belongs to the TACO1 family.

The protein localises to the cytoplasm. In Synechocystis sp. (strain ATCC 27184 / PCC 6803 / Kazusa), this protein is Probable transcriptional regulatory protein slr0989.